A 304-amino-acid polypeptide reads, in one-letter code: Ribosomal RNA large subunit methyltransferase F (304 aa).

It belongs to the methyltransferase superfamily. METTL16/RlmF family.

The protein localises to the cytoplasm. It carries out the reaction adenosine(1618) in 23S rRNA + S-adenosyl-L-methionine = N(6)-methyladenosine(1618) in 23S rRNA + S-adenosyl-L-homocysteine + H(+). Specifically methylates the adenine in position 1618 of 23S rRNA. In Klebsiella pneumoniae (strain 342), this protein is Ribosomal RNA large subunit methyltransferase F.